The following is a 527-amino-acid chain: Probable malate:quinone oxidoreductase (527 aa).

This sequence belongs to the MQO family. It depends on FAD as a cofactor.

The enzyme catalyses (S)-malate + a quinone = a quinol + oxaloacetate. The protein operates within carbohydrate metabolism; tricarboxylic acid cycle; oxaloacetate from (S)-malate (quinone route): step 1/1. The protein is Probable malate:quinone oxidoreductase of Pectobacterium carotovorum subsp. carotovorum (strain PC1).